Consider the following 175-residue polypeptide: Inorganic pyrophosphatase (175 aa).

Substrate is bound by residues Lys-30, Arg-44, and Tyr-56. Mg(2+) contacts are provided by Asp-66, Asp-71, and Asp-103. Position 142 (Tyr-142) interacts with substrate.

This sequence belongs to the PPase family. As to quaternary structure, homohexamer. The cofactor is Mg(2+).

The protein resides in the cytoplasm. It carries out the reaction diphosphate + H2O = 2 phosphate + H(+). Catalyzes the hydrolysis of inorganic pyrophosphate (PPi) forming two phosphate ions. In Buchnera aphidicola subsp. Baizongia pistaciae (strain Bp), this protein is Inorganic pyrophosphatase.